Here is a 754-residue protein sequence, read N- to C-terminus: 5-methyltetrahydropteroyltriglutamate--homocysteine methyltransferase (754 aa).

5-methyltetrahydropteroyltri-L-glutamate is bound by residues 17-20 (RELK) and Lys-117. Residues 431 to 433 (IGS) and Glu-484 each bind L-homocysteine. L-methionine contacts are provided by residues 431–433 (IGS) and Glu-484. 5-methyltetrahydropteroyltri-L-glutamate is bound by residues 515–516 (RC) and Trp-561. Asp-599 contacts L-homocysteine. Asp-599 is an L-methionine binding site. Residue Glu-605 participates in 5-methyltetrahydropteroyltri-L-glutamate binding. Residues His-641, Cys-643, and Glu-665 each coordinate Zn(2+). His-694 (proton donor) is an active-site residue. Cys-726 contributes to the Zn(2+) binding site.

The protein belongs to the vitamin-B12 independent methionine synthase family. Zn(2+) is required as a cofactor.

The enzyme catalyses 5-methyltetrahydropteroyltri-L-glutamate + L-homocysteine = tetrahydropteroyltri-L-glutamate + L-methionine. The protein operates within amino-acid biosynthesis; L-methionine biosynthesis via de novo pathway; L-methionine from L-homocysteine (MetE route): step 1/1. In terms of biological role, catalyzes the transfer of a methyl group from 5-methyltetrahydrofolate to homocysteine resulting in methionine formation. This is 5-methyltetrahydropteroyltriglutamate--homocysteine methyltransferase from Salmonella agona (strain SL483).